The primary structure comprises 260 residues: Hydroxyacylglutathione hydrolase (260 aa).

Zn(2+) contacts are provided by histidine 61, histidine 63, aspartate 65, histidine 66, histidine 119, aspartate 138, and histidine 176.

This sequence belongs to the metallo-beta-lactamase superfamily. Glyoxalase II family. Monomer. Zn(2+) is required as a cofactor.

It catalyses the reaction an S-(2-hydroxyacyl)glutathione + H2O = a 2-hydroxy carboxylate + glutathione + H(+). It functions in the pathway secondary metabolite metabolism; methylglyoxal degradation; (R)-lactate from methylglyoxal: step 2/2. Its function is as follows. Thiolesterase that catalyzes the hydrolysis of S-D-lactoyl-glutathione to form glutathione and D-lactic acid. The polypeptide is Hydroxyacylglutathione hydrolase (Brucella suis (strain ATCC 23445 / NCTC 10510)).